We begin with the raw amino-acid sequence, 160 residues long: Nucleotide-binding protein BP2916 (160 aa).

Belongs to the YajQ family.

Nucleotide-binding protein. This chain is Nucleotide-binding protein BP2916, found in Bordetella pertussis (strain Tohama I / ATCC BAA-589 / NCTC 13251).